The chain runs to 838 residues: Probable glucan 1,3-beta-glucosidase D (838 aa).

The span at 1–23 shows a compositional bias: basic and acidic residues; sequence MPSHSRSRDRYRGRDESEPERDR. The tract at residues 1-298 is disordered; that stretch reads MPSHSRSRDR…GASDSDMDGA (298 aa). The Cytoplasmic portion of the chain corresponds to 1 to 310; it reads MPSHSRSRDR…GTPFWKKKKT (310 aa). The segment covering 35–45 has biased composition (acidic residues); the sequence is DYEDDELDDDD. Basic and acidic residues-rich tracts occupy residues 111-124, 149-164, 200-221, and 234-246; these read DSPR…DGDR, SRDD…EREA, AKLR…AKAE, and QPRR…EETP. A helical; Signal-anchor for type II membrane protein membrane pass occupies residues 311–331; that stretch reads WIAVGVVVVLLAIIIPVAVVV. The Extracellular segment spans residues 332–838; it reads SKKNNEKKSD…PDFGDLPENY (507 aa). A disordered region spans residues 335 to 359; sequence NNEKKSDSTTDDTTPRNSNLDGISR. Asn-383, Asn-388, Asn-400, Asn-553, and Asn-565 each carry an N-linked (GlcNAc...) asparagine glycan. Catalysis depends on Glu-604, which acts as the Proton donor. N-linked (GlcNAc...) asparagine glycosylation is found at Asn-643 and Asn-696. Glu-709 (nucleophile) is an active-site residue.

This sequence belongs to the glycosyl hydrolase 5 (cellulase A) family.

The protein resides in the cell membrane. It carries out the reaction Successive hydrolysis of beta-D-glucose units from the non-reducing ends of (1-&gt;3)-beta-D-glucans, releasing alpha-glucose.. Glucosidase involved in the degradation of cellulosic biomass. Active on lichenan. This chain is Probable glucan 1,3-beta-glucosidase D (exgD), found in Aspergillus terreus (strain NIH 2624 / FGSC A1156).